Consider the following 435-residue polypeptide: 3-phosphoshikimate 1-carboxyvinyltransferase (435 aa).

3 residues coordinate 3-phosphoshikimate: Lys-15, Ser-16, and Arg-20. Lys-15 lines the phosphoenolpyruvate pocket. Positions 96 and 124 each coordinate phosphoenolpyruvate. 3-phosphoshikimate is bound by residues Ser-169, Gln-171, Ser-195, Asp-319, and Lys-346. Position 171 (Gln-171) interacts with phosphoenolpyruvate. Asp-319 serves as the catalytic Proton acceptor. Phosphoenolpyruvate-binding residues include Arg-350 and Arg-395.

This sequence belongs to the EPSP synthase family. In terms of assembly, monomer.

The protein localises to the cytoplasm. It catalyses the reaction 3-phosphoshikimate + phosphoenolpyruvate = 5-O-(1-carboxyvinyl)-3-phosphoshikimate + phosphate. It participates in metabolic intermediate biosynthesis; chorismate biosynthesis; chorismate from D-erythrose 4-phosphate and phosphoenolpyruvate: step 6/7. Catalyzes the transfer of the enolpyruvyl moiety of phosphoenolpyruvate (PEP) to the 5-hydroxyl of shikimate-3-phosphate (S3P) to produce enolpyruvyl shikimate-3-phosphate and inorganic phosphate. The polypeptide is 3-phosphoshikimate 1-carboxyvinyltransferase (Chlorobium phaeobacteroides (strain BS1)).